Reading from the N-terminus, the 120-residue chain is MITKVDRNAVRKKRHARIRKKIFGTTERPRLSVFRSNKHIYAQIIDDTKSATIVSASTLDKEFGLDSTNNIEAAKKVGELVAKRALEKGIKQVVFDRGGYLYHGRVKALADAAREAGLEF.

Belongs to the universal ribosomal protein uL18 family. In terms of assembly, part of the 50S ribosomal subunit; part of the 5S rRNA/L5/L18 subcomplex. In B.stearothermophilus only 2 proteins, L5 and L18 have been shown to be part of this subcomplex, unlike the case in E.coli and T.thermophilus where L25 (TL5) is also found. The protein, when overexpressed in E.coli, contains a phosphoserine, which is required for the protein to bind to 5S rRNA. It has been suggested, based solely on amino acid conservation, that this occurs on Ser-57.

Its function is as follows. This is one of the proteins that bind and probably mediate the attachment of the 5S RNA into the large ribosomal subunit, where it forms part of the central protuberance. The protein is Large ribosomal subunit protein uL18 (rplR) of Geobacillus stearothermophilus (Bacillus stearothermophilus).